The primary structure comprises 652 residues: tRNA 5-methylaminomethyl-2-thiouridine biosynthesis bifunctional protein MnmC (652 aa).

Positions 1 to 235 are tRNA (mnm(5)s(2)U34)-methyltransferase; the sequence is MPDRLVPATL…EPALRVGEYA (235 aa). Residues 259 to 652 are FAD-dependent cmnm(5)s(2)U34 oxidoreductase; sequence IGAGLAGCAV…IRALRGRQIG (394 aa).

It in the N-terminal section; belongs to the methyltransferase superfamily. tRNA (mnm(5)s(2)U34)-methyltransferase family. This sequence in the C-terminal section; belongs to the DAO family. The cofactor is FAD.

Its subcellular location is the cytoplasm. It carries out the reaction 5-aminomethyl-2-thiouridine(34) in tRNA + S-adenosyl-L-methionine = 5-methylaminomethyl-2-thiouridine(34) in tRNA + S-adenosyl-L-homocysteine + H(+). Catalyzes the last two steps in the biosynthesis of 5-methylaminomethyl-2-thiouridine (mnm(5)s(2)U) at the wobble position (U34) in tRNA. Catalyzes the FAD-dependent demodification of cmnm(5)s(2)U34 to nm(5)s(2)U34, followed by the transfer of a methyl group from S-adenosyl-L-methionine to nm(5)s(2)U34, to form mnm(5)s(2)U34. This is tRNA 5-methylaminomethyl-2-thiouridine biosynthesis bifunctional protein MnmC from Burkholderia ambifaria (strain ATCC BAA-244 / DSM 16087 / CCUG 44356 / LMG 19182 / AMMD) (Burkholderia cepacia (strain AMMD)).